We begin with the raw amino-acid sequence, 267 residues long: MRKKTSSNKKNTAKKNNNISLHRKLGLIYKKTILILKIVLIIFICLFAFTKYFASLKSYLKTNIYQTTTELGFKLENVIIEGQQNVDEPTILKVLNAKKGSSIFALNLDEIRNNLKNNRWIKEVYVSRRLPSTIYIKLFEREPIAIWQINNQLFLIDEEGYEISKNIEPFPHLLHVVGEGANIYASKLVNELQKYPALINKTSSAIRCGDRRWDLNLKGGINIKLPAKNFEEALKYIDALNKANKLFNQNYKQLDLRDKNKYYIEKY.

The Cytoplasmic portion of the chain corresponds to 1–32 (MRKKTSSNKKNTAKKNNNISLHRKLGLIYKKT). The helical transmembrane segment at 33–53 (ILILKIVLIIFICLFAFTKYF) threads the bilayer. At 54–267 (ASLKSYLKTN…DKNKYYIEKY (214 aa)) the chain is on the periplasmic side. The POTRA domain maps to 73–141 (FKLENVIIEG…STIYIKLFER (69 aa)).

Belongs to the FtsQ/DivIB family. FtsQ subfamily.

The protein localises to the cell inner membrane. In terms of biological role, essential cell division protein. This is Cell division protein FtsQ from Rickettsia bellii (strain RML369-C).